A 278-amino-acid chain; its full sequence is Ribosomal RNA small subunit methyltransferase A (278 aa).

Residues Asn-27, Leu-29, Gly-54, Glu-75, Asp-101, and Asn-122 each coordinate S-adenosyl-L-methionine.

Belongs to the class I-like SAM-binding methyltransferase superfamily. rRNA adenine N(6)-methyltransferase family. RsmA subfamily.

The protein resides in the cytoplasm. It carries out the reaction adenosine(1518)/adenosine(1519) in 16S rRNA + 4 S-adenosyl-L-methionine = N(6)-dimethyladenosine(1518)/N(6)-dimethyladenosine(1519) in 16S rRNA + 4 S-adenosyl-L-homocysteine + 4 H(+). Its function is as follows. Specifically dimethylates two adjacent adenosines (A1518 and A1519) in the loop of a conserved hairpin near the 3'-end of 16S rRNA in the 30S particle. May play a critical role in biogenesis of 30S subunits. This Brucella anthropi (strain ATCC 49188 / DSM 6882 / CCUG 24695 / JCM 21032 / LMG 3331 / NBRC 15819 / NCTC 12168 / Alc 37) (Ochrobactrum anthropi) protein is Ribosomal RNA small subunit methyltransferase A.